Consider the following 388-residue polypeptide: Chalcone synthase DIV (388 aa).

Cys-164 is a catalytic residue.

The protein belongs to the thiolase-like superfamily. Chalcone/stilbene synthases family.

It catalyses the reaction (E)-4-coumaroyl-CoA + 3 malonyl-CoA + 3 H(+) = 2',4,4',6'-tetrahydroxychalcone + 3 CO2 + 4 CoA. The protein operates within secondary metabolite biosynthesis; flavonoid biosynthesis. The primary product of this enzyme is 4,2',4',6'-tetrahydroxychalcone (also termed naringenin-chalcone or chalcone) which can under specific conditions spontaneously isomerize into naringenin. This Ipomoea batatas (Sweet potato) protein is Chalcone synthase DIV (CHS-DIV).